We begin with the raw amino-acid sequence, 266 residues long: Glutamate racemase (266 aa).

Substrate is bound by residues 9–10 and 41–42; these read DS and YG. Residue Cys73 is the Proton donor/acceptor of the active site. 74–75 lines the substrate pocket; the sequence is NS. Cys183 functions as the Proton donor/acceptor in the catalytic mechanism. 184 to 185 lines the substrate pocket; that stretch reads TH.

It belongs to the aspartate/glutamate racemases family.

It carries out the reaction L-glutamate = D-glutamate. Its pathway is cell wall biogenesis; peptidoglycan biosynthesis. In terms of biological role, provides the (R)-glutamate required for cell wall biosynthesis. The polypeptide is Glutamate racemase (Shewanella halifaxensis (strain HAW-EB4)).